Here is a 156-residue protein sequence, read N- to C-terminus: Methylated-DNA--protein-cysteine methyltransferase (156 aa).

Cys-126 serves as the catalytic Nucleophile; methyl group acceptor.

This sequence belongs to the MGMT family.

The protein resides in the cytoplasm. The catalysed reaction is a 6-O-methyl-2'-deoxyguanosine in DNA + L-cysteinyl-[protein] = S-methyl-L-cysteinyl-[protein] + a 2'-deoxyguanosine in DNA. It catalyses the reaction a 4-O-methyl-thymidine in DNA + L-cysteinyl-[protein] = a thymidine in DNA + S-methyl-L-cysteinyl-[protein]. Its function is as follows. Involved in the cellular defense against the biological effects of O6-methylguanine (O6-MeG) and O4-methylthymine (O4-MeT) in DNA. Repairs the methylated nucleobase in DNA by stoichiometrically transferring the methyl group to a cysteine residue in the enzyme. This is a suicide reaction: the enzyme is irreversibly inactivated. The protein is Methylated-DNA--protein-cysteine methyltransferase of Methanosarcina acetivorans (strain ATCC 35395 / DSM 2834 / JCM 12185 / C2A).